The chain runs to 823 residues: MESVESAARDYRETLAELRNNNKTQINLLTILADDFKKAAPQIVEVIERHLTTCSPSQKLLVMYVCDSILKNVKKPNDYDALFARKIVSMFEHAFRQGDERIRTSLYRIRVTWASTTLFMPSKLYELDMKINKLDPNWPISNPQTGRALRDDPQVMAPSQSRPAGNATSPAASTSTNRVFVNPKFIGSSTPGAASASKTVVEKTKSPGTVNKEKQVKKEPKQDPLDKLLPSSSASKTSSSPAGLKRKSAPSEHPNAPIRKKPQQPPKPQTAIDEDLRSISLTKKPPVPSAQDQDFRPKTLKPTSVIGSHAFAPVAAPIRPMIPVPPPVSVAPFVPAPPLSSAPPFQHPQQHHPQLPPPPVHQGMGRGYHHNSPPQDPAPIVPVQAPPPQQHLPAPENVYSSEQPKLDVPANNRIFVDGKAYEVMFVDDTAVIERGGAPHRIYFAGPPRNLVIDGIPHLLQFDTPTQIDILGSKHMVKFGAPSRELYIGGHPFKGQFGGPPIIATINGRRHEIRLTGSAPEVRIEPEPAYHLTHFLHKMREEKKIEIASEKPEKKEDWLSYLKNLRTRNILPAPARSPSSPRNQTPPPANLPIPGMNNAGQRGGYHNRHQPQQNARWGGANKQQNIPPPPSDPSPIGSGVEKRSAPPAAITDFNIRLLQIRYDSVVDALITKRADACKFCGMRLDDSQGKSKEWQDHMDWHVKQNLARHGSNNSAAVPYRQWYPSTSTWLTPRASDETNEQEADKPEEPLPGVASSGVKTKECSVCGEKFDEYYDDDEETWRLRDTVNVHGKIVHSACASDAARSLDNSSFFNDSDIKKEEPFD.

The CID domain maps to 3-135 (SVESAARDYR…ELDMKINKLD (133 aa)). 5 disordered regions span residues 142–176 (NPQTGRALRDDPQVMAPSQSRPAGNATSPAASTST), 188–301 (SSTP…KTLK), 340–395 (SSAP…LPAP), 570–643 (LPAP…EKRS), and 728–755 (WLTPRASDETNEQEADKPEEPLPGVASS). Polar residues-rich tracts occupy residues 157-176 (APSQSRPAGNATSPAASTST) and 188-198 (SSTPGAASASK). Positions 200–226 (VVEKTKSPGTVNKEKQVKKEPKQDPLD) are enriched in basic and acidic residues. 2 stretches are compositionally biased toward low complexity: residues 227-242 (KLLPSSSASKTSSSPA) and 342-353 (APPFQHPQQHHP). Residues 374–390 (PQDPAPIVPVQAPPPQQ) show a composition bias toward pro residues. Over residues 571-581 (PAPARSPSSPR) the composition is skewed to low complexity. A compositionally biased stretch (polar residues) spans 609–624 (QPQQNARWGGANKQQN).

This Caenorhabditis elegans protein is Polyadenylation and cleavage factor homolog 11 (pcf-11).